We begin with the raw amino-acid sequence, 577 residues long: 2-succinyl-5-enolpyruvyl-6-hydroxy-3-cyclohexene-1-carboxylate synthase (577 aa).

The protein belongs to the TPP enzyme family. MenD subfamily. Homodimer. It depends on Mg(2+) as a cofactor. Mn(2+) is required as a cofactor. The cofactor is thiamine diphosphate.

The enzyme catalyses isochorismate + 2-oxoglutarate + H(+) = 5-enolpyruvoyl-6-hydroxy-2-succinyl-cyclohex-3-ene-1-carboxylate + CO2. It functions in the pathway quinol/quinone metabolism; 1,4-dihydroxy-2-naphthoate biosynthesis; 1,4-dihydroxy-2-naphthoate from chorismate: step 2/7. Its pathway is cofactor biosynthesis; phylloquinone biosynthesis. Its function is as follows. Catalyzes the thiamine diphosphate-dependent decarboxylation of 2-oxoglutarate and the subsequent addition of the resulting succinic semialdehyde-thiamine pyrophosphate anion to isochorismate to yield 2-succinyl-5-enolpyruvyl-6-hydroxy-3-cyclohexene-1-carboxylate (SEPHCHC). This is 2-succinyl-5-enolpyruvyl-6-hydroxy-3-cyclohexene-1-carboxylate synthase from Synechococcus sp. (strain CC9311).